Consider the following 438-residue polypeptide: Glycosyl hydrolase family 109 protein (438 aa).

The segment at residues 1-33 (MDKTSRRDLLKLASLAGIGAGLARSQGSSKSMA) is a signal peptide (tat-type signal). NAD(+)-binding positions include 52–53 (GR), D74, 125–128 (WVWH), 145–146 (EV), and N174. Residues Y203, R221, 233–236 (YPTH), and Y315 contribute to the substrate site. An NAD(+)-binding site is contributed by Y233. A disordered region spans residues 408 to 438 (GPLSEASVANGSAPQKFPDFTRGKWQTRQPV).

It belongs to the Gfo/Idh/MocA family. Glycosyl hydrolase 109 subfamily. It depends on NAD(+) as a cofactor. Predicted to be exported by the Tat system. The position of the signal peptide cleavage has not been experimentally proven.

Functionally, glycosidase. This chain is Glycosyl hydrolase family 109 protein, found in Solibacter usitatus (strain Ellin6076).